The chain runs to 575 residues: Electron transfer flavoprotein-ubiquinone oxidoreductase, mitochondrial (575 aa).

Residues 1 to 33 (MQRVLRAAAAGIGHASGHRAPRWGAAAAAARWL) constitute a mitochondrion transit peptide. 44 to 58 (VVVVGAGPAGLAAAI) is an FAD binding site. An intramembrane segment occupies 82–103 (VGAHVLSGNVFEPRALDELIPK). Gly276 and Gly277 together coordinate a ubiquinone. The stretch at 343–363 (IPNPVFPGGAIIGCSAGFLNV) is an intramembrane region. Residues Cys520, Cys544, Cys547, and Cys550 each coordinate [4Fe-4S] cluster. Residues 535-564 (QKLHINAQNCLHCKACDIKDPKQNIEWTVP) enclose the 4Fe-4S ferredoxin-type domain.

The protein belongs to the ETF-QO/FixC family. Requires [4Fe-4S] cluster as cofactor. FAD is required as a cofactor.

The protein resides in the mitochondrion inner membrane. The catalysed reaction is a ubiquinone + reduced [electron-transfer flavoprotein] = a ubiquinol + oxidized [electron-transfer flavoprotein] + H(+). Accepts electrons from ETF and reduces ubiquinone. The protein is Electron transfer flavoprotein-ubiquinone oxidoreductase, mitochondrial of Oryza sativa subsp. japonica (Rice).